The sequence spans 38 residues: Mu/omega-theraphotoxin-Mb1a (38 aa).

3 disulfides stabilise this stretch: Cys-7-Cys-21, Cys-14-Cys-26, and Cys-20-Cys-33. Thr-38 is subject to Threonine amide.

It belongs to the neurotoxin 10 (Hwtx-1) family. 28 (Jztx-11) subfamily. As to expression, expressed by the venom gland.

It is found in the secreted. In terms of biological role, paralytic toxin that inhibits insect voltage-gated sodium (Nav) and calcium (Cav) channels in P.americana (American cockroach) dorsal unpaired median (DUM) neurons, and inhibits the B.germanica (German cockroach) Nav channel (BgNaV1). Also shows a delay in fast inactivation when tested on BgNaV1. May act as a gating-modifier toxin on Nav and as a pore blocker on Cav. In vivo, reversibly paralyzes both L.cuprina (Australian sheep blowfly) and M.domestica (housefly), but does not affect larvae of H.armigera (cotton bollworms). This Monocentropus balfouri (Socotra Island blue baboon tarantula) protein is Mu/omega-theraphotoxin-Mb1a.